Here is a 370-residue protein sequence, read N- to C-terminus: Quinolinate synthase (370 aa).

2 residues coordinate iminosuccinate: H62 and S83. A [4Fe-4S] cluster-binding site is contributed by C128. Iminosuccinate contacts are provided by residues 154 to 156 and S171; that span reads YAN. A [4Fe-4S] cluster-binding site is contributed by C215. Residues 241–243 and T258 contribute to the iminosuccinate site; that span reads HPE. Residue C312 coordinates [4Fe-4S] cluster.

The protein belongs to the quinolinate synthase family. Type 1 subfamily. [4Fe-4S] cluster serves as cofactor.

It localises to the cytoplasm. It carries out the reaction iminosuccinate + dihydroxyacetone phosphate = quinolinate + phosphate + 2 H2O + H(+). It participates in cofactor biosynthesis; NAD(+) biosynthesis; quinolinate from iminoaspartate: step 1/1. Catalyzes the condensation of iminoaspartate with dihydroxyacetone phosphate to form quinolinate. This is Quinolinate synthase from Neisseria meningitidis serogroup A / serotype 4A (strain DSM 15465 / Z2491).